Here is a 623-residue protein sequence, read N- to C-terminus: Glutamyl-tRNA(Gln) amidotransferase subunit E (623 aa).

Belongs to the GatB/GatE family. GatE subfamily. Heterodimer of GatD and GatE.

The catalysed reaction is L-glutamyl-tRNA(Gln) + L-glutamine + ATP + H2O = L-glutaminyl-tRNA(Gln) + L-glutamate + ADP + phosphate + H(+). Its function is as follows. Allows the formation of correctly charged Gln-tRNA(Gln) through the transamidation of misacylated Glu-tRNA(Gln) in organisms which lack glutaminyl-tRNA synthetase. The reaction takes place in the presence of glutamine and ATP through an activated gamma-phospho-Glu-tRNA(Gln). The GatDE system is specific for glutamate and does not act on aspartate. This is Glutamyl-tRNA(Gln) amidotransferase subunit E from Haloarcula marismortui (strain ATCC 43049 / DSM 3752 / JCM 8966 / VKM B-1809) (Halobacterium marismortui).